Here is a 159-residue protein sequence, read N- to C-terminus: Phosphopantetheine adenylyltransferase (159 aa).

S8 is a binding site for substrate. ATP is bound by residues 8-9 (SF) and H16. Substrate contacts are provided by K40, T72, and R86. ATP-binding positions include 87–89 (GLR), E97, and 122–128 (YSFLSSS).

Belongs to the bacterial CoaD family. Homohexamer. Mg(2+) is required as a cofactor.

The protein localises to the cytoplasm. The enzyme catalyses (R)-4'-phosphopantetheine + ATP + H(+) = 3'-dephospho-CoA + diphosphate. The protein operates within cofactor biosynthesis; coenzyme A biosynthesis; CoA from (R)-pantothenate: step 4/5. Functionally, reversibly transfers an adenylyl group from ATP to 4'-phosphopantetheine, yielding dephospho-CoA (dPCoA) and pyrophosphate. This chain is Phosphopantetheine adenylyltransferase, found in Synechocystis sp. (strain ATCC 27184 / PCC 6803 / Kazusa).